The chain runs to 344 residues: 17-beta-hydroxysteroid dehydrogenase type 1 (344 aa).

3 to 32 is a binding site for NAD(+); the sequence is PTVVLITGCSSGIGMHLAVRLASDRSQSFK. NADP(+) is bound by residues 10-38 and D66; that span reads GCSS…ATLR. Position 135 is a phosphoserine (S135). Residue S143 participates in substrate binding. Y156 (proton acceptor) is an active-site residue. K160 contacts NADP(+).

The protein belongs to the short-chain dehydrogenases/reductases (SDR) family. As to quaternary structure, homodimer. Exists predominantly as a homodimer but also exits as monomer.

It localises to the cytoplasm. It catalyses the reaction 17beta-estradiol + NAD(+) = estrone + NADH + H(+). The enzyme catalyses 17beta-estradiol + NADP(+) = estrone + NADPH + H(+). It carries out the reaction testosterone + NADP(+) = androst-4-ene-3,17-dione + NADPH + H(+). It functions in the pathway steroid biosynthesis; estrogen biosynthesis. Its function is as follows. Favors the reduction of estrogens and androgens. Converts estrone (E1) to a more potent estrogen, 17beta-estradiol (E2). Also has 20-alpha-HSD activity. Uses preferentially NADH. The sequence is that of 17-beta-hydroxysteroid dehydrogenase type 1 from Mus musculus (Mouse).